Consider the following 88-residue polypeptide: Small ribosomal subunit protein uS17 (88 aa).

The protein belongs to the universal ribosomal protein uS17 family. Part of the 30S ribosomal subunit.

Functionally, one of the primary rRNA binding proteins, it binds specifically to the 5'-end of 16S ribosomal RNA. The protein is Small ribosomal subunit protein uS17 of Levilactobacillus brevis (strain ATCC 367 / BCRC 12310 / CIP 105137 / JCM 1170 / LMG 11437 / NCIMB 947 / NCTC 947) (Lactobacillus brevis).